Consider the following 97-residue polypeptide: Cell division topological specificity factor (97 aa).

It belongs to the MinE family.

Functionally, prevents the cell division inhibition by proteins MinC and MinD at internal division sites while permitting inhibition at polar sites. This ensures cell division at the proper site by restricting the formation of a division septum at the midpoint of the long axis of the cell. The protein is Cell division topological specificity factor of Rhodospirillum centenum (strain ATCC 51521 / SW).